We begin with the raw amino-acid sequence, 90 residues long: Large ribosomal subunit protein bL27 (90 aa).

The tract at residues 1–22 (MAHKKAGGSTRNGRDSNPKMLG) is disordered.

Belongs to the bacterial ribosomal protein bL27 family.

The polypeptide is Large ribosomal subunit protein bL27 (Coxiella burnetii (strain CbuK_Q154) (Coxiella burnetii (strain Q154))).